We begin with the raw amino-acid sequence, 243 residues long: Undecaprenyl-phosphate mannosyltransferase (243 aa).

It belongs to the glycosyltransferase 2 family.

The enzyme catalyses di-trans,octa-cis-undecaprenyl phosphate + GDP-alpha-D-mannose = D-mannosyl di-trans,octa-cis-undecaprenyl phosphate + GDP. Functionally, catalyzes the transfer of mannose from GDP-mannose to D-mannosyl-1-phosphoundecaprenol. This Micrococcus luteus (strain ATCC 4698 / DSM 20030 / JCM 1464 / CCM 169 / CCUG 5858 / IAM 1056 / NBRC 3333 / NCIMB 9278 / NCTC 2665 / VKM Ac-2230) (Micrococcus lysodeikticus) protein is Undecaprenyl-phosphate mannosyltransferase.